The chain runs to 118 residues: Large ribosomal subunit protein eL18 (118 aa).

Belongs to the eukaryotic ribosomal protein eL18 family.

This is Large ribosomal subunit protein eL18 from Sulfurisphaera tokodaii (strain DSM 16993 / JCM 10545 / NBRC 100140 / 7) (Sulfolobus tokodaii).